A 191-amino-acid polypeptide reads, in one-letter code: Cell division protein SepF (191 aa).

The segment covering 151–165 has biased composition (low complexity); it reads SSSPEEASPSSVPTE. The interval 151-191 is disordered; it reads SSSPEEASPSSVPTENTPQYSLGKNTTPEPAWGNSKLSAYS. Polar residues predominate over residues 166–178; the sequence is NTPQYSLGKNTTP.

The protein belongs to the SepF family. In terms of assembly, homodimer. Interacts with FtsZ.

Its subcellular location is the cytoplasm. In terms of biological role, cell division protein that is part of the divisome complex and is recruited early to the Z-ring. Probably stimulates Z-ring formation, perhaps through the cross-linking of FtsZ protofilaments. Its function overlaps with FtsA. The polypeptide is Cell division protein SepF (Prochlorococcus marinus (strain MIT 9215)).